The chain runs to 167 residues: MARASGASDYRSGELSHQDERGAAHMVDITEKATTKRTAVAAGILRTSAQVVALISTGGLPKGDALATARVAGIMAAKRTSDLIPLCHQLALTGVDVDFTVGQLDIEITATVRSTDRTGVEMEALTAVSVAALTLYDMIKAVDPGALIDDIRVLHKEGGRRGTWTRR.

A disordered region spans residues 1–23; the sequence is MARASGASDYRSGELSHQDERGA. Residues 11–23 are compositionally biased toward basic and acidic residues; the sequence is RSGELSHQDERGA. Residues 86–88 and 122–123 each bind substrate; these read LCH and ME. Aspartate 137 is an active-site residue.

This sequence belongs to the MoaC family. In terms of assembly, homohexamer; trimer of dimers.

It carries out the reaction (8S)-3',8-cyclo-7,8-dihydroguanosine 5'-triphosphate = cyclic pyranopterin phosphate + diphosphate. It participates in cofactor biosynthesis; molybdopterin biosynthesis. Functionally, catalyzes the conversion of (8S)-3',8-cyclo-7,8-dihydroguanosine 5'-triphosphate to cyclic pyranopterin monophosphate (cPMP). The chain is Cyclic pyranopterin monophosphate synthase 2 (moaC2) from Mycobacterium bovis (strain ATCC BAA-935 / AF2122/97).